Consider the following 430-residue polypeptide: Serine--tRNA ligase (430 aa).

L-serine is bound at residue 231-233 (TSE). 262–264 (RSE) is a binding site for ATP. Glutamate 285 lines the L-serine pocket. ATP is bound at residue 349–352 (EISS). Position 385 (serine 385) interacts with L-serine.

The protein belongs to the class-II aminoacyl-tRNA synthetase family. Type-1 seryl-tRNA synthetase subfamily. Homodimer. The tRNA molecule binds across the dimer.

Its subcellular location is the cytoplasm. The enzyme catalyses tRNA(Ser) + L-serine + ATP = L-seryl-tRNA(Ser) + AMP + diphosphate + H(+). It carries out the reaction tRNA(Sec) + L-serine + ATP = L-seryl-tRNA(Sec) + AMP + diphosphate + H(+). Its pathway is aminoacyl-tRNA biosynthesis; selenocysteinyl-tRNA(Sec) biosynthesis; L-seryl-tRNA(Sec) from L-serine and tRNA(Sec): step 1/1. Catalyzes the attachment of serine to tRNA(Ser). Is also able to aminoacylate tRNA(Sec) with serine, to form the misacylated tRNA L-seryl-tRNA(Sec), which will be further converted into selenocysteinyl-tRNA(Sec). The polypeptide is Serine--tRNA ligase (Ruegeria pomeroyi (strain ATCC 700808 / DSM 15171 / DSS-3) (Silicibacter pomeroyi)).